A 147-amino-acid polypeptide reads, in one-letter code: UPF0178 protein Nther_1836 (147 aa).

The protein belongs to the UPF0178 family.

The protein is UPF0178 protein Nther_1836 of Natranaerobius thermophilus (strain ATCC BAA-1301 / DSM 18059 / JW/NM-WN-LF).